A 531-amino-acid polypeptide reads, in one-letter code: Polygalacturonase (531 aa).

The N-terminal stretch at 1-23 (MILSHRYTLIALAAAILSSGAHA) is a signal peptide. Aspartate 307 (proton donor) is an active-site residue. Residue histidine 333 is part of the active site. The interval 518–531 (AFVPLKSVAPTSPI) is required for PGA export across the outer membrane and catalytic activity.

The protein belongs to the glycosyl hydrolase 28 family. Monomer.

The protein localises to the secreted. It carries out the reaction (1,4-alpha-D-galacturonosyl)n+m + H2O = (1,4-alpha-D-galacturonosyl)n + (1,4-alpha-D-galacturonosyl)m.. Its function is as follows. Contributes to the wilt disease production on tomato. The sequence is that of Polygalacturonase (pglA) from Ralstonia nicotianae (strain ATCC BAA-1114 / GMI1000) (Ralstonia solanacearum).